Here is a 163-residue protein sequence, read N- to C-terminus: NADH-quinone oxidoreductase subunit I (163 aa).

4Fe-4S ferredoxin-type domains follow at residues 53-83 (LRRYPNGEERCIACKLCEAICPAQAITIEAG) and 94-123 (VRYDIDMVKCIYCGFCQEACPVEAIVEGPN). [4Fe-4S] cluster contacts are provided by C63, C66, C69, C73, C103, C106, C109, and C113.

Belongs to the complex I 23 kDa subunit family. In terms of assembly, NDH-1 is composed of 14 different subunits. Subunits NuoA, H, J, K, L, M, N constitute the membrane sector of the complex. The cofactor is [4Fe-4S] cluster.

Its subcellular location is the cell inner membrane. It catalyses the reaction a quinone + NADH + 5 H(+)(in) = a quinol + NAD(+) + 4 H(+)(out). Its function is as follows. NDH-1 shuttles electrons from NADH, via FMN and iron-sulfur (Fe-S) centers, to quinones in the respiratory chain. The immediate electron acceptor for the enzyme in this species is believed to be ubiquinone. Couples the redox reaction to proton translocation (for every two electrons transferred, four hydrogen ions are translocated across the cytoplasmic membrane), and thus conserves the redox energy in a proton gradient. This Bartonella tribocorum (strain CIP 105476 / IBS 506) protein is NADH-quinone oxidoreductase subunit I.